We begin with the raw amino-acid sequence, 609 residues long: Glutamine--fructose-6-phosphate aminotransferase [isomerizing] (609 aa).

C2 functions as the Nucleophile; for GATase activity in the catalytic mechanism. Residues 2 to 218 enclose the Glutamine amidotransferase type-2 domain; that stretch reads CGIVGAIAQR…EGDIAEITRR (217 aa). SIS domains lie at 286–426 and 458–599; these read ADEL…LKGL and LAED…VDQP. K604 serves as the catalytic For Fru-6P isomerization activity.

Homodimer.

It is found in the cytoplasm. The enzyme catalyses D-fructose 6-phosphate + L-glutamine = D-glucosamine 6-phosphate + L-glutamate. In terms of biological role, catalyzes the first step in hexosamine metabolism, converting fructose-6P into glucosamine-6P using glutamine as a nitrogen source. This chain is Glutamine--fructose-6-phosphate aminotransferase [isomerizing], found in Escherichia coli O157:H7.